We begin with the raw amino-acid sequence, 343 residues long: Protein RecA (343 aa).

Residue 64 to 71 (GPESSGKT) coordinates ATP.

Belongs to the RecA family.

The protein resides in the cytoplasm. Functionally, can catalyze the hydrolysis of ATP in the presence of single-stranded DNA, the ATP-dependent uptake of single-stranded DNA by duplex DNA, and the ATP-dependent hybridization of homologous single-stranded DNAs. It interacts with LexA causing its activation and leading to its autocatalytic cleavage. The chain is Protein RecA from Acidiphilium cryptum (strain JF-5).